A 351-amino-acid polypeptide reads, in one-letter code: 3-dehydroquinate synthase (351 aa).

NAD(+) contacts are provided by residues Asp-60–Lys-65, Gly-94–Asp-98, Thr-118–Thr-119, Lys-131, Lys-140, and Phe-158–Thr-161. 3 residues coordinate Zn(2+): Glu-173, His-239, and His-256.

Belongs to the sugar phosphate cyclases superfamily. Dehydroquinate synthase family. Co(2+) is required as a cofactor. It depends on Zn(2+) as a cofactor. NAD(+) serves as cofactor.

The protein localises to the cytoplasm. It carries out the reaction 7-phospho-2-dehydro-3-deoxy-D-arabino-heptonate = 3-dehydroquinate + phosphate. It participates in metabolic intermediate biosynthesis; chorismate biosynthesis; chorismate from D-erythrose 4-phosphate and phosphoenolpyruvate: step 2/7. Its function is as follows. Catalyzes the conversion of 3-deoxy-D-arabino-heptulosonate 7-phosphate (DAHP) to dehydroquinate (DHQ). The sequence is that of 3-dehydroquinate synthase from Campylobacter jejuni subsp. jejuni serotype O:23/36 (strain 81-176).